Reading from the N-terminus, the 445-residue chain is 3-phosphoshikimate 1-carboxyvinyltransferase (445 aa).

Positions 21, 22, and 26 each coordinate 3-phosphoshikimate. K21 is a binding site for phosphoenolpyruvate. Phosphoenolpyruvate-binding residues include G92 and R120. S165, Q166, D307, and K334 together coordinate 3-phosphoshikimate. Position 166 (Q166) interacts with phosphoenolpyruvate. Residue D307 is the Proton acceptor of the active site. Phosphoenolpyruvate is bound by residues R338, R379, and K405.

It belongs to the EPSP synthase family. As to quaternary structure, monomer.

It localises to the cytoplasm. The enzyme catalyses 3-phosphoshikimate + phosphoenolpyruvate = 5-O-(1-carboxyvinyl)-3-phosphoshikimate + phosphate. The protein operates within metabolic intermediate biosynthesis; chorismate biosynthesis; chorismate from D-erythrose 4-phosphate and phosphoenolpyruvate: step 6/7. Functionally, catalyzes the transfer of the enolpyruvyl moiety of phosphoenolpyruvate (PEP) to the 5-hydroxyl of shikimate-3-phosphate (S3P) to produce enolpyruvyl shikimate-3-phosphate and inorganic phosphate. The protein is 3-phosphoshikimate 1-carboxyvinyltransferase of Chlamydia pneumoniae (Chlamydophila pneumoniae).